Consider the following 106-residue polypeptide: NADH dehydrogenase [ubiquinone] iron-sulfur protein 5 (106 aa).

Positions 30 to 74 (APRCHAFEKEWIECAHGIGAIRAEKECKIEYDDFIECLLRQKTMR) constitute a CHCH domain. 2 short sequence motifs (cx9C motif) span residues 33-43 (CHAFEKEWIEC) and 56-66 (CKIEYDDFIEC). Intrachain disulfides connect cysteine 33-cysteine 66 and cysteine 43-cysteine 56. Residues 87–106 (IKEGKYTPPPHHIGKGEPRP) are disordered.

It belongs to the complex I NDUFS5 subunit family. Mammalian complex I is composed of 45 different subunits. This is a component of the iron-sulfur (IP) fragment of the enzyme.

It localises to the mitochondrion inner membrane. It is found in the mitochondrion intermembrane space. In terms of biological role, accessory subunit of the mitochondrial membrane respiratory chain NADH dehydrogenase (Complex I), that is believed not to be involved in catalysis. Complex I functions in the transfer of electrons from NADH to the respiratory chain. The immediate electron acceptor for the enzyme is believed to be ubiquinone. The polypeptide is NADH dehydrogenase [ubiquinone] iron-sulfur protein 5 (NDUFS5) (Macaca fascicularis (Crab-eating macaque)).